Here is a 77-residue protein sequence, read N- to C-terminus: Small ribosomal subunit protein bS20 (77 aa).

The protein belongs to the bacterial ribosomal protein bS20 family.

Binds directly to 16S ribosomal RNA. This is Small ribosomal subunit protein bS20 from Lactococcus lactis subsp. cremoris (strain MG1363).